We begin with the raw amino-acid sequence, 336 residues long: Ornithine carbamoyltransferase, catabolic (336 aa).

Residues 57 to 60, Gln84, Arg108, and 135 to 138 each bind carbamoyl phosphate; these read STRT and HPTQ. Residues Asn168, Asp232, and 236-237 each bind L-ornithine; that span reads SM. Carbamoyl phosphate-binding positions include 274–275 and Arg321; that span reads CL.

The protein belongs to the aspartate/ornithine carbamoyltransferase superfamily. OTCase family. Nonameric or dodecamer (tetramer of trimers).

It is found in the cytoplasm. It carries out the reaction carbamoyl phosphate + L-ornithine = L-citrulline + phosphate + H(+). It functions in the pathway amino-acid degradation; L-arginine degradation via ADI pathway; carbamoyl phosphate from L-arginine: step 2/2. Its activity is regulated as follows. Inhibited by 2-aminopentanoic acid (norvaline). Activated by phosphate and nucleoside monophosphates such as AMP, GMP, CMP, UMP. Allosterically inhibited by the polyamines such as spermidine and putrescine. Involved in the catabolism of arginine. Catalyzes the phosphorolysis of citrulline, the reverse reaction of the biosynthetic one, yielding ornithine and carbamoyl phosphate which serve to generate ATP from ADP. This catabolic OTCase does not carry out the biosynthetic reaction because of a poor affinity and a marked cooperativity for carbamoyl phosphate. This chain is Ornithine carbamoyltransferase, catabolic, found in Pseudomonas aeruginosa (strain ATCC 15692 / DSM 22644 / CIP 104116 / JCM 14847 / LMG 12228 / 1C / PRS 101 / PAO1).